Consider the following 289-residue polypeptide: 4-hydroxy-3-methylbut-2-enyl diphosphate reductase (289 aa).

Cysteine 12 lines the [4Fe-4S] cluster pocket. (2E)-4-hydroxy-3-methylbut-2-enyl diphosphate is bound by residues histidine 41 and histidine 84. 2 residues coordinate dimethylallyl diphosphate: histidine 41 and histidine 84. Residues histidine 41 and histidine 84 each coordinate isopentenyl diphosphate. A [4Fe-4S] cluster-binding site is contributed by cysteine 106. Histidine 134 contacts (2E)-4-hydroxy-3-methylbut-2-enyl diphosphate. Histidine 134 lines the dimethylallyl diphosphate pocket. Histidine 134 serves as a coordination point for isopentenyl diphosphate. The active-site Proton donor is glutamate 136. Residue serine 172 coordinates (2E)-4-hydroxy-3-methylbut-2-enyl diphosphate. Cysteine 200 contributes to the [4Fe-4S] cluster binding site. (2E)-4-hydroxy-3-methylbut-2-enyl diphosphate is bound by residues serine 229, asparagine 231, and serine 273. Residues serine 229, asparagine 231, and serine 273 each coordinate dimethylallyl diphosphate. Isopentenyl diphosphate is bound by residues serine 229, asparagine 231, and serine 273.

It belongs to the IspH family. The cofactor is [4Fe-4S] cluster.

The enzyme catalyses isopentenyl diphosphate + 2 oxidized [2Fe-2S]-[ferredoxin] + H2O = (2E)-4-hydroxy-3-methylbut-2-enyl diphosphate + 2 reduced [2Fe-2S]-[ferredoxin] + 2 H(+). It catalyses the reaction dimethylallyl diphosphate + 2 oxidized [2Fe-2S]-[ferredoxin] + H2O = (2E)-4-hydroxy-3-methylbut-2-enyl diphosphate + 2 reduced [2Fe-2S]-[ferredoxin] + 2 H(+). The protein operates within isoprenoid biosynthesis; dimethylallyl diphosphate biosynthesis; dimethylallyl diphosphate from (2E)-4-hydroxy-3-methylbutenyl diphosphate: step 1/1. Its pathway is isoprenoid biosynthesis; isopentenyl diphosphate biosynthesis via DXP pathway; isopentenyl diphosphate from 1-deoxy-D-xylulose 5-phosphate: step 6/6. Functionally, catalyzes the conversion of 1-hydroxy-2-methyl-2-(E)-butenyl 4-diphosphate (HMBPP) into a mixture of isopentenyl diphosphate (IPP) and dimethylallyl diphosphate (DMAPP). Acts in the terminal step of the DOXP/MEP pathway for isoprenoid precursor biosynthesis. The polypeptide is 4-hydroxy-3-methylbut-2-enyl diphosphate reductase (Opitutus terrae (strain DSM 11246 / JCM 15787 / PB90-1)).